We begin with the raw amino-acid sequence, 185 residues long: Large ribosomal subunit protein uL13 (185 aa).

This sequence belongs to the universal ribosomal protein uL13 family. In terms of assembly, part of the 50S ribosomal subunit.

In terms of biological role, this protein is one of the early assembly proteins of the 50S ribosomal subunit, although it is not seen to bind rRNA by itself. It is important during the early stages of 50S assembly. The sequence is that of Large ribosomal subunit protein uL13 from Pyrobaculum islandicum (strain DSM 4184 / JCM 9189 / GEO3).